A 121-amino-acid chain; its full sequence is Large ribosomal subunit protein eL18 (121 aa).

This sequence belongs to the eukaryotic ribosomal protein eL18 family.

This is Large ribosomal subunit protein eL18 from Methanospirillum hungatei JF-1 (strain ATCC 27890 / DSM 864 / NBRC 100397 / JF-1).